The following is a 481-amino-acid chain: uncharacterized protein (481 aa).

It belongs to the metallophosphoesterase superfamily.

This is an uncharacterized protein from Bacillus subtilis (strain 168).